A 119-amino-acid polypeptide reads, in one-letter code: MIYWILLALAIVSEITGTLALKWASVGGGHAGFILMLVMISLSYILLSFSVKRIALGVAYALWEGVGIVLITLFSVLLFNETLTVQKALGLLVLIAGILLIKTGTRTVSRKAEVRHVAG.

The next 4 membrane-spanning stretches (helical) occupy residues 1–21, 31–51, 54–74, and 81–101; these read MIYW…TLAL, AGFI…SFSV, IALG…ITLF, and ETLT…ILLI.

This sequence belongs to the drug/metabolite transporter (DMT) superfamily. Small multidrug resistance (SMR) (TC 2.A.7.1) family. MdtJ subfamily. In terms of assembly, forms a complex with MdtI.

It is found in the cell inner membrane. Functionally, catalyzes the excretion of spermidine. The sequence is that of Spermidine export protein MdtJ (mdtJ) from Cronobacter sakazakii (strain ATCC BAA-894) (Enterobacter sakazakii).